Reading from the N-terminus, the 432-residue chain is Adenosylhomocysteinase (432 aa).

Substrate contacts are provided by threonine 56, aspartate 131, and glutamate 156. 157-159 (TTT) lines the NAD(+) pocket. The substrate site is built by lysine 186 and aspartate 190. Residues asparagine 191, 222–227 (GDVGKG), glutamate 243, 299–301 (IGH), and asparagine 346 contribute to the NAD(+) site.

Belongs to the adenosylhomocysteinase family. The cofactor is NAD(+).

The catalysed reaction is S-adenosyl-L-homocysteine + H2O = L-homocysteine + adenosine. Its pathway is amino-acid biosynthesis; L-homocysteine biosynthesis; L-homocysteine from S-adenosyl-L-homocysteine: step 1/1. Its function is as follows. Adenosylhomocysteine is a competitive inhibitor of S-adenosyl-L-methionine-dependent methyl transferase reactions; therefore adenosylhomocysteinase may play a key role in the control of methylations via regulation of the intracellular concentration of adenosylhomocysteine. This Anopheles gambiae (African malaria mosquito) protein is Adenosylhomocysteinase (Ahcy13).